The chain runs to 616 residues: Dihydroxy-acid dehydratase (616 aa).

Asp-81 contacts Mg(2+). Cys-122 is a [2Fe-2S] cluster binding site. Mg(2+) contacts are provided by Asp-123 and Lys-124. Lys-124 is modified (N6-carboxylysine). Cys-195 is a [2Fe-2S] cluster binding site. Glu-491 provides a ligand contact to Mg(2+). Catalysis depends on Ser-517, which acts as the Proton acceptor.

This sequence belongs to the IlvD/Edd family. In terms of assembly, homodimer. [2Fe-2S] cluster is required as a cofactor. The cofactor is Mg(2+).

It carries out the reaction (2R)-2,3-dihydroxy-3-methylbutanoate = 3-methyl-2-oxobutanoate + H2O. It catalyses the reaction (2R,3R)-2,3-dihydroxy-3-methylpentanoate = (S)-3-methyl-2-oxopentanoate + H2O. Its pathway is amino-acid biosynthesis; L-isoleucine biosynthesis; L-isoleucine from 2-oxobutanoate: step 3/4. It participates in amino-acid biosynthesis; L-valine biosynthesis; L-valine from pyruvate: step 3/4. Its function is as follows. Functions in the biosynthesis of branched-chain amino acids. Catalyzes the dehydration of (2R,3R)-2,3-dihydroxy-3-methylpentanoate (2,3-dihydroxy-3-methylvalerate) into 2-oxo-3-methylpentanoate (2-oxo-3-methylvalerate) and of (2R)-2,3-dihydroxy-3-methylbutanoate (2,3-dihydroxyisovalerate) into 2-oxo-3-methylbutanoate (2-oxoisovalerate), the penultimate precursor to L-isoleucine and L-valine, respectively. The sequence is that of Dihydroxy-acid dehydratase from Escherichia coli O9:H4 (strain HS).